The chain runs to 125 residues: Small ribosomal subunit protein uS13 (125 aa).

It belongs to the universal ribosomal protein uS13 family. As to quaternary structure, part of the 30S ribosomal subunit. Forms a loose heterodimer with protein S19. Forms two bridges to the 50S subunit in the 70S ribosome.

Functionally, located at the top of the head of the 30S subunit, it contacts several helices of the 16S rRNA. In the 70S ribosome it contacts the 23S rRNA (bridge B1a) and protein L5 of the 50S subunit (bridge B1b), connecting the 2 subunits; these bridges are implicated in subunit movement. Contacts the tRNAs in the A and P-sites. This is Small ribosomal subunit protein uS13 from Rickettsia akari (strain Hartford).